The chain runs to 365 residues: Glycine oxidase (365 aa).

Residues 12–13 (VI), 32–33 (DQ), 40–41 (SS), 45–47 (GGI), and isoleucine 173 each bind FAD. Residue arginine 302 coordinates substrate. 327–333 (HYRNGLV) contacts FAD.

This sequence belongs to the DAO family. ThiO subfamily. As to quaternary structure, monomer. It depends on FAD as a cofactor.

The catalysed reaction is glycine + O2 + H2O = glyoxylate + H2O2 + NH4(+). The enzyme catalyses sarcosine + O2 + H2O = methylamine + glyoxylate + H2O2. It participates in cofactor biosynthesis; thiamine diphosphate biosynthesis. Its function is as follows. Catalyzes the oxidation of glycine, leading to glyoxyl imine and hydrogen peroxide as primary products; glyoxyl imine is used for the biosynthesis of the thiazole ring of thiamine. Otherwise, glyoxyl imine is spontaneously hydrolyzed in water to produce glyoxylate and ammonia. Can also use sarcosine (N-methylglycine) as substrate, and, to a lesser extent, N-ethylglycine and D-proline. Has no activity towards other amino-acids D-Asp, D-Glu, D-Gln, D-His, D-Leu, D-Lys, D-ornithine, D-Trp, D-Val, L-Ala, L-Asp, L-Glu, L-His, L-Leu, L-Lys, L-Met and L-Pro. This chain is Glycine oxidase, found in Pseudomonas putida (strain ATCC 47054 / DSM 6125 / CFBP 8728 / NCIMB 11950 / KT2440).